A 375-amino-acid polypeptide reads, in one-letter code: DNA replication and repair protein RecF (375 aa).

30–37 (GKNAQGKT) serves as a coordination point for ATP.

The protein belongs to the RecF family.

It is found in the cytoplasm. The RecF protein is involved in DNA metabolism; it is required for DNA replication and normal SOS inducibility. RecF binds preferentially to single-stranded, linear DNA. It also seems to bind ATP. In Lactobacillus acidophilus (strain ATCC 700396 / NCK56 / N2 / NCFM), this protein is DNA replication and repair protein RecF.